The chain runs to 255 residues: Acetylglutamate kinase (255 aa).

Substrate-binding positions include 40–41, arginine 62, and asparagine 153; that span reads GG.

This sequence belongs to the acetylglutamate kinase family. ArgB subfamily.

The protein resides in the cytoplasm. It carries out the reaction N-acetyl-L-glutamate + ATP = N-acetyl-L-glutamyl 5-phosphate + ADP. It participates in amino-acid biosynthesis; L-arginine biosynthesis; N(2)-acetyl-L-ornithine from L-glutamate: step 2/4. Its function is as follows. Catalyzes the ATP-dependent phosphorylation of N-acetyl-L-glutamate. This Bacillus cereus (strain ATCC 14579 / DSM 31 / CCUG 7414 / JCM 2152 / NBRC 15305 / NCIMB 9373 / NCTC 2599 / NRRL B-3711) protein is Acetylglutamate kinase.